Reading from the N-terminus, the 185-residue chain is Prenylated Rab acceptor protein 1 (185 aa).

Over M1–Y78 the chain is Cytoplasmic. The tract at residues A30–F54 is required for interaction with prenylated RAB3A and VAMP2. A run of 2 helical transmembrane segments spans residues V79–P94 and M95–L112. The Cytoplasmic segment spans residues R113–Q131. The next 2 helical transmembrane spans lie at Y132–A148 and G149–S165. A required for interaction with GDI1 region spans residues S165 to V185. Residues H166–V185 are Cytoplasmic-facing. A required for interaction with prenylated RAB3A and VAMP2 region spans residues V175 to V185. The homodimerization stretch occupies residues V175–V185.

Belongs to the PRA1 family. Homodimer. Interacts with VAMP2 (synaptobrevin-2), prenylated Rab proteins, GDI1, NDRG1 and PCLO.

It localises to the cell membrane. It is found in the cytoplasm. The protein resides in the golgi apparatus. The protein localises to the cytoplasmic vesicle. Its subcellular location is the secretory vesicle. It localises to the synaptic vesicle. General Rab protein regulator required for vesicle formation from the Golgi complex. May control vesicle docking and fusion by mediating the action of Rab GTPases to the SNARE complexes. In addition it inhibits the removal of Rab GTPases from the membrane by GDI1. The polypeptide is Prenylated Rab acceptor protein 1 (RABAC1) (Bos taurus (Bovine)).